Reading from the N-terminus, the 116-residue chain is Large ribosomal subunit protein bL17 (116 aa).

Belongs to the bacterial ribosomal protein bL17 family. As to quaternary structure, part of the 50S ribosomal subunit. Contacts protein L32.

This Prochlorococcus marinus (strain NATL2A) protein is Large ribosomal subunit protein bL17.